We begin with the raw amino-acid sequence, 372 residues long: MHEHSVEKTQILQKYLELPQNGKVIAEYVWVDGTGNLRSKARTLNKVITSIEQLPEWNFDGSSTNQAPGYDSDIYLKPVAFYPDPFRRGDNITVLAECFNSDGTPNKFNHRHEANKLFQAHKDEEIWFGIEQEYTLFDMYDNVYAWPKGGYPAPQGPYYCGVGAGKVYARDVIEAHYRACLYAGINISGINAEVMPSQWEFQVGPCEGISMGDQLWMARYFLHRVAEEFGVKISFHPKPLKGDWNGAGCHTNVSTKDMRVPGGMKYIEQAIEKLSKRHNEHIKLYGADNEQRLTGRHETASMTSFSSGVANRGASIRIPRPVAKEGFGYFEDRRPASNIDPYLVTGIMCETVCGAIENANMSKEYERETNEQ.

Residues 24 to 103 (VIAEYVWVDG…VLAECFNSDG (80 aa)) enclose the GS beta-grasp domain. The GS catalytic domain maps to 110–372 (HRHEANKLFQ…KEYERETNEQ (263 aa)).

Belongs to the glutamine synthetase family. In terms of assembly, homooctamer.

The protein localises to the cytoplasm. The catalysed reaction is L-glutamate + NH4(+) + ATP = L-glutamine + ADP + phosphate + H(+). In Candida glabrata (strain ATCC 2001 / BCRC 20586 / JCM 3761 / NBRC 0622 / NRRL Y-65 / CBS 138) (Yeast), this protein is Glutamine synthetase (GLN1).